Consider the following 444-residue polypeptide: Orexin receptor type 2 (444 aa).

Positions 1 to 10 (MSGTKLEDSP) are enriched in basic and acidic residues. The disordered stretch occupies residues 1-30 (MSGTKLEDSPPCRNWSSAPELNETQEPFLN). The Extracellular portion of the chain corresponds to 1–54 (MSGTKLEDSPPCRNWSSAPELNETQEPFLNPTDYDDEEFLRYLWREYLHPKEYE). Residues N14 and N22 are each glycosylated (N-linked (GlcNAc...) asparagine). Positions 14–27 (NWSSAPELNETQEP) are enriched in polar residues. The interval 33-49 (DYDDEEFLRYLWREYLH) is required for response to orexin-A. The helical transmembrane segment at 55-75 (WVLIAGYIIVFVVALVGNVLV) threads the bilayer. At 76–88 (CVAVWKNHHMRTV) the chain is on the cytoplasmic side. A helical membrane pass occupies residues 89–110 (TNYFIVNLSLADVLVTITCLPA). Residues 111 to 127 (TLVVDITETWFFGQSLC) are Extracellular-facing. A disulfide bridge links C127 with C210. The chain crosses the membrane as a helical span at residues 128–150 (KVIPYLQTVSVSVSVLTLSCIAL). Residues 151–170 (DRWYAICHPLMFKSTAKRAR) are Cytoplasmic-facing. Residues 171-191 (NSIVIIWIVSCIIMIPQAIVM) form a helical membrane-spanning segment. Over 192 to 222 (ECSTMLPGLANKTTLFTVCDERWGGEIYPKM) the chain is Extracellular. N202 is a glycosylation site (N-linked (GlcNAc...) asparagine). The helical transmembrane segment at 223 to 243 (YHICFFLVTYMAPLCLMVLAY) threads the bilayer. The Cytoplasmic portion of the chain corresponds to 244-304 (LQIFRKLWCR…QIRARRKTAR (61 aa)). A helical transmembrane segment spans residues 305–326 (MLMVVLLVFAICYLPISILNVL). Over 327 to 342 (KRVFGMFTHTEDRETV) the chain is Extracellular. The helical transmembrane segment at 343-366 (YAWFTFSHWLVYANSAANPIIYNF) threads the bilayer. The Cytoplasmic segment spans residues 367–444 (LSGKFREEFK…ANGAGPLQNW (78 aa)).

This sequence belongs to the G-protein coupled receptor 1 family.

It localises to the cell membrane. In terms of biological role, nonselective, high-affinity receptor for both orexin-A and orexin-B neuropeptides. Triggers an increase in cytoplasmic Ca(2+) levels in response to orexin-A binding. This Canis lupus familiaris (Dog) protein is Orexin receptor type 2 (HCRTR2).